Consider the following 205-residue polypeptide: Protein-L-isoaspartate O-methyltransferase (205 aa).

S56 is a catalytic residue.

It belongs to the methyltransferase superfamily. L-isoaspartyl/D-aspartyl protein methyltransferase family.

Its subcellular location is the cytoplasm. It carries out the reaction [protein]-L-isoaspartate + S-adenosyl-L-methionine = [protein]-L-isoaspartate alpha-methyl ester + S-adenosyl-L-homocysteine. Its function is as follows. Catalyzes the methyl esterification of L-isoaspartyl residues in peptides and proteins that result from spontaneous decomposition of normal L-aspartyl and L-asparaginyl residues. It plays a role in the repair and/or degradation of damaged proteins. The chain is Protein-L-isoaspartate O-methyltransferase from Pyrobaculum arsenaticum (strain DSM 13514 / JCM 11321 / PZ6).